Consider the following 506-residue polypeptide: Bone morphogenetic protein 6 (506 aa).

The signal sequence occupies residues 1-20 (MPGLGRRAQWLCWWWGLLCS). The propeptide occupies 21-367 (CGPPPLRPPL…VSEVHVRTTR (347 aa)). 3 disordered regions span residues 44–64 (AGGS…SGFL), 87–125 (PHRP…RLKS), and 139–195 (KDDE…PLTS). The span at 96-112 (LQQPQSPVLPQQQQSQQ) shows a compositional bias: low complexity. The segment covering 140 to 153 (DDEEDGVSEGEGLE) has biased composition (acidic residues). Residues Asn234, Asn262, Asn379, Asn397, and Asn447 are each glycosylated (N-linked (GlcNAc...) asparagine). The segment at 366–397 (TRSASSRRRQQSRNRSTQSQDVSRGSSASDYN) is disordered. Positions 386-397 (DVSRGSSASDYN) are enriched in polar residues. 3 cysteine pairs are disulfide-bonded: Cys405/Cys471, Cys434/Cys503, and Cys438/Cys505.

It belongs to the TGF-beta family. Interacts with SOSTDC1. Interacts (when glycosylated) with type I receptor ACVR1; the interaction may induce HAMP expression. Interacts with type II receptor ACVR2B. Interacts with Hemojuvelin/HJV. Interacts with ERFE; the interaction inhibits BMP-induced transcription of HAMP. Interacts with BMPR1A/ALK3. Forms heterodimers with BMP2 in vitro; the heterodimer then binds to its receptor BMPR1A /ALK3 and may induce HAMP expression.

Its subcellular location is the secreted. Growth factor of the TGF-beta superfamily that plays essential roles in many developmental processes including cartilage and bone formation. Also plays an important role in the regulation of HAMP/hepcidin expression and iron metabolism by acting as a ligand for hemojuvelin/HJV. Also acts to promote expression of HAMP, potentially via the interaction with its receptor BMPR1A/ALK3. Initiates the canonical BMP signaling cascade by associating with type I receptor ACVR1 and type II receptor ACVR2B. In turn, ACVR1 propagates signal by phosphorylating SMAD1/5/8 that travel to the nucleus and act as activators and repressors of transcription of target. Can also signal through non-canonical pathway such as TAZ-Hippo signaling cascade to modulate VEGF signaling by regulating VEGFR2 expression. The sequence is that of Bone morphogenetic protein 6 (Bmp6) from Rattus norvegicus (Rat).